We begin with the raw amino-acid sequence, 215 residues long: Adenylate kinase (215 aa).

ATP is bound at residue 10–15 (GAGKGT). Residues 30 to 59 (STGDILRENVKNQTELGKKAKEYMDKGLLV) form an NMP region. AMP is bound by residues Thr-31, Arg-36, 57–59 (LLV), 85–88 (GFPR), and Gln-92. The interval 126–163 (GRRICKSCGASFHVVYRPPKKEGICDICGGQLYQREDD) is LID. ATP is bound at residue Arg-127. 2 residues coordinate Zn(2+): Cys-130 and Cys-133. 136–137 (SF) is a binding site for ATP. 2 residues coordinate Zn(2+): Cys-150 and Cys-153. Residues Arg-160 and Arg-171 each coordinate AMP. An ATP-binding site is contributed by Glu-199.

This sequence belongs to the adenylate kinase family. In terms of assembly, monomer.

It is found in the cytoplasm. It catalyses the reaction AMP + ATP = 2 ADP. Its pathway is purine metabolism; AMP biosynthesis via salvage pathway; AMP from ADP: step 1/1. Its function is as follows. Catalyzes the reversible transfer of the terminal phosphate group between ATP and AMP. Plays an important role in cellular energy homeostasis and in adenine nucleotide metabolism. This chain is Adenylate kinase, found in Caldicellulosiruptor saccharolyticus (strain ATCC 43494 / DSM 8903 / Tp8T 6331).